Here is a 205-residue protein sequence, read N- to C-terminus: Arginine exporter protein ArgO (205 aa).

The next 6 membrane-spanning stretches (helical) occupy residues 1–21, 42–62, 67–87, 111–131, 147–167, and 185–205; these read MLAV…PLGP, LCAL…SALL, LLLA…GWGA, ILVT…DTFV, WFAL…AFLA, and LFVG…GFGL.

Belongs to the LysE/ArgO transporter (TC 2.A.75) family.

It is found in the cell inner membrane. The enzyme catalyses L-arginine(in) = L-arginine(out). In terms of biological role, involved in the export of arginine. Important to control the intracellular level of arginine and the correct balance between arginine and lysine. This is Arginine exporter protein ArgO from Yersinia pseudotuberculosis serotype O:3 (strain YPIII).